The following is a 64-amino-acid chain: Phylloxin-B1 (64 aa).

The N-terminal stretch at methionine 1 to cysteine 22 is a signal peptide. The propeptide occupies glutamate 23–glutamate 42. Glutamine 63 bears the Glutamine amide mark.

Expressed by the skin glands.

The protein resides in the secreted. Functionally, antimicrobial peptide against the wall-less bacteria A.laidlawii and S.melliferum, the Gram-positive bacteria B.megaterium KM, C.glutamicum ATCC 27853 and M.luteus ATCC 27853 and the Gram-negative-bacteria R.meliloti 102F34 and E.coli K12. This chain is Phylloxin-B1, found in Phyllomedusa bicolor (Two-colored leaf frog).